A 282-amino-acid polypeptide reads, in one-letter code: Bifunctional protein FolD (282 aa).

Residues 165–167, Ser190, and Ile231 each bind NADP(+); that span reads NRS.

This sequence belongs to the tetrahydrofolate dehydrogenase/cyclohydrolase family. As to quaternary structure, homodimer.

It carries out the reaction (6R)-5,10-methylene-5,6,7,8-tetrahydrofolate + NADP(+) = (6R)-5,10-methenyltetrahydrofolate + NADPH. The enzyme catalyses (6R)-5,10-methenyltetrahydrofolate + H2O = (6R)-10-formyltetrahydrofolate + H(+). It functions in the pathway one-carbon metabolism; tetrahydrofolate interconversion. In terms of biological role, catalyzes the oxidation of 5,10-methylenetetrahydrofolate to 5,10-methenyltetrahydrofolate and then the hydrolysis of 5,10-methenyltetrahydrofolate to 10-formyltetrahydrofolate. This is Bifunctional protein FolD from Clostridium botulinum (strain Kyoto / Type A2).